A 161-amino-acid polypeptide reads, in one-letter code: 6,7-dimethyl-8-ribityllumazine synthase (161 aa).

5-amino-6-(D-ribitylamino)uracil-binding positions include Trp25, 57-59 (AFE), and 80-82 (VVI). 85–86 (GT) serves as a coordination point for (2S)-2-hydroxy-3-oxobutyl phosphate. The Proton donor role is filled by His88. Phe113 provides a ligand contact to 5-amino-6-(D-ribitylamino)uracil. Residue Arg127 participates in (2S)-2-hydroxy-3-oxobutyl phosphate binding.

The protein belongs to the DMRL synthase family.

It carries out the reaction (2S)-2-hydroxy-3-oxobutyl phosphate + 5-amino-6-(D-ribitylamino)uracil = 6,7-dimethyl-8-(1-D-ribityl)lumazine + phosphate + 2 H2O + H(+). It functions in the pathway cofactor biosynthesis; riboflavin biosynthesis; riboflavin from 2-hydroxy-3-oxobutyl phosphate and 5-amino-6-(D-ribitylamino)uracil: step 1/2. Functionally, catalyzes the formation of 6,7-dimethyl-8-ribityllumazine by condensation of 5-amino-6-(D-ribitylamino)uracil with 3,4-dihydroxy-2-butanone 4-phosphate. This is the penultimate step in the biosynthesis of riboflavin. The polypeptide is 6,7-dimethyl-8-ribityllumazine synthase (Kineococcus radiotolerans (strain ATCC BAA-149 / DSM 14245 / SRS30216)).